Reading from the N-terminus, the 487-residue chain is MTQDVEMKDNQTPTQSVVSAPTSTLQNLKEIAALIDTGSYTKEVRRIARAVRLTVGLRRKLTGSVISSFLDFALVPGSEAHTRLSSFVPKSDEHDMEVDTASSNSQAPPKHLPAELEIYCYFIVLLFLIDQKKYNEAKVCSTASIARLKSVNRRTVDVIASKLYFYYSLSYELTNDLAEIRSTLLALHHSATLRHDELGQETLLNLLLRNYLHYNLYDQAEKLRSKAPRFEAHSNQQFCRYLFYLGKIRTIQLEYTDAKESLLQAARKAPVASLGFRIQCNKWAIIVRLLLGEIPERSIFTQKGMEKTLRPYFELTNAVRIGDLELFGKIQEKFAKTFAEDRTHNLIVRLRHNVIRTGLRNISISYSRISLQDVAQKLRLNSANPVADAESIVAKAIRDGAIDATIDHKNGCMVSKETGDIYSTNEPQTAFNSRIAFCLNMHNEAVRALRFPPNTHREKESEEKRREMKQQEEELAKYMAEEDDDDF.

A disordered region spans residues 1–21; sequence MTQDVEMKDNQTPTQSVVSAP. Positions 10 to 21 are enriched in polar residues; the sequence is NQTPTQSVVSAP. The 182-residue stretch at 239 to 420 folds into the PCI domain; the sequence is CRYLFYLGKI…GCMVSKETGD (182 aa). The interval 452–487 is disordered; sequence PPNTHREKESEEKRREMKQQEEELAKYMAEEDDDDF. The segment covering 455 to 480 has biased composition (basic and acidic residues); that stretch reads THREKESEEKRREMKQQEEELAKYMA.

It belongs to the proteasome subunit S3 family. As to quaternary structure, component of the 19S regulatory particle (RP/PA700) lid subcomplex of the 26S proteasome. The 26S proteasome is composed of a core protease (CP), known as the 20S proteasome, capped at one or both ends by the 19S regulatory particle (RP/PA700). The RP/PA700 complex is composed of at least 17 different subunits in two subcomplexes, the base and the lid, which form the portions proximal and distal to the 20S proteolytic core, respectively. Interacts with UCH1 and UCH2. As to expression, preferentially expressed in flowers.

In terms of biological role, acts as a regulatory subunit of the 26 proteasome which is involved in the ATP-dependent degradation of ubiquitinated proteins. This Arabidopsis thaliana (Mouse-ear cress) protein is 26S proteasome non-ATPase regulatory subunit 3 homolog B.